Reading from the N-terminus, the 936-residue chain is Protein translocase subunit SecA (936 aa).

ATP-binding positions include Gln-90, 108 to 112 (GEGKT), and Asp-499.

This sequence belongs to the SecA family. In terms of assembly, monomer and homodimer. Part of the essential Sec protein translocation apparatus which comprises SecA, SecYEG and auxiliary proteins SecDF. Other proteins may also be involved.

The protein localises to the cell inner membrane. It is found in the cellular thylakoid membrane. It localises to the cytoplasm. It catalyses the reaction ATP + H2O + cellular proteinSide 1 = ADP + phosphate + cellular proteinSide 2.. Functionally, part of the Sec protein translocase complex. Interacts with the SecYEG preprotein conducting channel. Has a central role in coupling the hydrolysis of ATP to the transfer of proteins into and across the cell membrane, serving as an ATP-driven molecular motor driving the stepwise translocation of polypeptide chains across the membrane. Its function is as follows. Probably participates in protein translocation into and across both the cytoplasmic and thylakoid membranes in cyanobacterial cells. The polypeptide is Protein translocase subunit SecA (Trichodesmium erythraeum (strain IMS101)).